We begin with the raw amino-acid sequence, 407 residues long: Dual-specificity RNA methyltransferase RlmN (407 aa).

Residue Glu136 is the Proton acceptor of the active site. A Radical SAM core domain is found at 144–378 (REDRGAVCIS…MDAGFASPIR (235 aa)). Cys151 and Cys389 are oxidised to a cystine. [4Fe-4S] cluster is bound by residues Cys158, Cys162, and Cys165. S-adenosyl-L-methionine is bound by residues 215 to 216 (GE), Ser247, 269 to 271 (SLH), and Asn346. Cys389 acts as the S-methylcysteine intermediate in catalysis.

Belongs to the radical SAM superfamily. RlmN family. The cofactor is [4Fe-4S] cluster.

It localises to the cytoplasm. It carries out the reaction adenosine(2503) in 23S rRNA + 2 reduced [2Fe-2S]-[ferredoxin] + 2 S-adenosyl-L-methionine = 2-methyladenosine(2503) in 23S rRNA + 5'-deoxyadenosine + L-methionine + 2 oxidized [2Fe-2S]-[ferredoxin] + S-adenosyl-L-homocysteine. It catalyses the reaction adenosine(37) in tRNA + 2 reduced [2Fe-2S]-[ferredoxin] + 2 S-adenosyl-L-methionine = 2-methyladenosine(37) in tRNA + 5'-deoxyadenosine + L-methionine + 2 oxidized [2Fe-2S]-[ferredoxin] + S-adenosyl-L-homocysteine. Its function is as follows. Specifically methylates position 2 of adenine 2503 in 23S rRNA and position 2 of adenine 37 in tRNAs. m2A2503 modification seems to play a crucial role in the proofreading step occurring at the peptidyl transferase center and thus would serve to optimize ribosomal fidelity. The chain is Dual-specificity RNA methyltransferase RlmN from Gluconobacter oxydans (strain 621H) (Gluconobacter suboxydans).